Reading from the N-terminus, the 410-residue chain is Histidine--tRNA ligase (410 aa).

It belongs to the class-II aminoacyl-tRNA synthetase family.

It is found in the cytoplasm. It carries out the reaction tRNA(His) + L-histidine + ATP = L-histidyl-tRNA(His) + AMP + diphosphate + H(+). The sequence is that of Histidine--tRNA ligase from Methanocorpusculum labreanum (strain ATCC 43576 / DSM 4855 / Z).